We begin with the raw amino-acid sequence, 197 residues long: Orotate phosphoribosyltransferase (197 aa).

5-phospho-alpha-D-ribose 1-diphosphate contacts are provided by residues arginine 87, lysine 91, histidine 93, and 112-120 (DDVATTGGS). Orotate-binding residues include threonine 116 and arginine 144.

It belongs to the purine/pyrimidine phosphoribosyltransferase family. PyrE subfamily. Homodimer. Mg(2+) serves as cofactor.

It carries out the reaction orotidine 5'-phosphate + diphosphate = orotate + 5-phospho-alpha-D-ribose 1-diphosphate. The protein operates within pyrimidine metabolism; UMP biosynthesis via de novo pathway; UMP from orotate: step 1/2. Functionally, catalyzes the transfer of a ribosyl phosphate group from 5-phosphoribose 1-diphosphate to orotate, leading to the formation of orotidine monophosphate (OMP). The polypeptide is Orotate phosphoribosyltransferase (Sulfolobus acidocaldarius (strain ATCC 33909 / DSM 639 / JCM 8929 / NBRC 15157 / NCIMB 11770)).